The sequence spans 1202 residues: Liprin-alpha-1 (1202 aa).

Residues 1–33 are disordered; it reads MMCEVMPTISEAEGPPGGGGGHGSGSPSQPDAD. Residues 15 to 24 are compositionally biased toward gly residues; sequence PPGGGGGHGS. Residues 34–141 adopt a coiled-coil conformation; it reads SHFEQLMVSM…VSRHERSLRM (108 aa). Ser150 is subject to Phosphoserine. A coiled-coil region spans residues 176–214; the sequence is EKVRERLRVALERCSLLEEELGATHKELMILKEQNNQKK. Disordered stretches follow at residues 224-245 and 426-446; these read NHEQ…SLSH and KNQE…HNKR. Thr230 bears the Phosphothreonine mark. Ser239, Ser242, and Ser244 each carry phosphoserine. 2 coiled-coil regions span residues 249–521 and 623–669; these read LAKV…GASL and ADAH…SGSL. Phosphoserine is present on Ser448. Basic and acidic residues predominate over residues 651-662; sequence ENTEQRAEEIES. The segment at 651–855 is disordered; sequence ENTEQRAEEI…SKLGGQAEKN (205 aa). 3 positions are modified to phosphoserine: Ser666, Ser668, and Ser693. Over residues 686–700 the composition is skewed to low complexity; it reads ASSLASSSPPGSGRS. A compositionally biased stretch (basic and acidic residues) spans 725–736; sequence SREEVRDDKTTI. Residue Thr761 is modified to Phosphothreonine. The segment covering 762–771 has biased composition (basic and acidic residues); sequence VSHEDIRDIR. Residue Ser763 is modified to Phosphoserine. Polar residues predominate over residues 832 to 841; that stretch reads VSETDNSSQD. The stretch at 847–871 forms a coiled coil; it reads KLGGQAEKNRKLQKKHELLEEARRQ. 3 SAM domains span residues 878-944, 963-1027, and 1051-1120; these read WDGP…IMSL, NHEW…LRRL, and WSND…LLVM. Positions 1021–1050 form a coiled coil; that stretch reads IMCLRRLNYDRKELERKREESQSEIKDVLV. A Phosphoserine modification is found at Ser1133. The residue at position 1159 (Thr1159) is a Phosphothreonine. A disordered region spans residues 1163-1202; it reads NFRVTSSMSSPSMQPKKMQMDGNVSGTQRLDSATVRTYSC. The span at 1168 to 1179 shows a compositional bias: low complexity; it reads SSMSSPSMQPKK. Over residues 1184–1202 the composition is skewed to polar residues; the sequence is GNVSGTQRLDSATVRTYSC.

Belongs to the liprin family. Liprin-alpha subfamily. As to quaternary structure, homodimer. Interacts with PTPRF (via D2 domain). Part of a cortical microtubule stabilization complex (CMSC) composed of KANK1, PPFIA1, PPFIBP1, ERC1/ELKS, PHLDB2/LL5beta, CLASPs, KIF21A and possibly additional interactors; within CMSCs KANK1 and PHLDB2/LL5beta seem to be the core components for recruiting microtubule-binding proteins KIF21A and CLASPs, whereas PPFIA1, PPFIBP1 and ERC1/ELKS serve as scaffolds for protein clustering. As to expression, ubiquitous.

Its subcellular location is the cytoplasm. The protein resides in the cell cortex. Its function is as follows. May regulate the disassembly of focal adhesions. May localize receptor-like tyrosine phosphatases type 2A at specific sites on the plasma membrane, possibly regulating their interaction with the extracellular environment and their association with substrates. The polypeptide is Liprin-alpha-1 (PPFIA1) (Homo sapiens (Human)).